A 445-amino-acid polypeptide reads, in one-letter code: Protein kinase C and casein kinase substrate in neurons protein 1 (445 aa).

Residues 12–282 form the F-BAR domain; the sequence is DETTDSFWEV…TIVSASAQED (271 aa). Coiled coils occupy residues 146–167 and 183–219; these read AKKLKELETAKKTYHMACKEEK and TTDQQKKLQEKVDKCKNDVQKAKEKYEKSLDELNKCT. A disordered region spans residues 327-390; that stretch reads LTQVTHGAEH…PFEEDSKGVR (64 aa). Polar residues-rich tracts occupy residues 338 to 358 and 368 to 379; these read TPQTGDRGSVSSYEKNQQYSA and TAAQSASETNGG. The 60-residue stretch at 386–445 folds into the SH3 domain; sequence SKGVRVRALYDYEGQEQDELTFKAGDELTKLEDEDEQGWCKGRLDSGQLGLYPANYVEPV.

Interacts with cobl.

The protein resides in the cytoplasm. It is found in the cytosol. The protein localises to the cell membrane. It localises to the cell projection. Its subcellular location is the synapse. The protein resides in the synaptosome. It is found in the cytoplasmic vesicle membrane. The protein localises to the ruffle membrane. It localises to the membrane. Functionally, binds to membranes via its F-BAR domain and mediates membrane tubulation. Plays a role in cellular transport processes by recruiting dynamins to membranes. Plays a role in the reorganization of the actin cytoskeleton and in neuron morphogenesis via its interaction with cobl, and by recruiting cobl to the cell cortex. Plays a role in the regulation of neurite formation, neurite branching and the regulation of neurite length. Required for normal synaptic vesicle endocytosis; this process retrieves previously released neurotransmitters to accommodate multiple cycles of neurotransmission. Required for normal excitatory and inhibitory synaptic transmission. Required for normal embryonic development, including normal development of laterality, normal body size and shape, as well as normal brain and heart development. Required for normal development of stereocilia and kinocilia in sensory hair cells of neuromasts in the posterior lateral line organ, and thus also for balance keeping and normal swimming behavior. In Danio rerio (Zebrafish), this protein is Protein kinase C and casein kinase substrate in neurons protein 1 (pacsin1b).